The primary structure comprises 281 residues: MSTYLVGDVHGCLVELKALLAQVSFNPEQDTLWLTGDLVARGPDSLQVLRFVRSLGSAVRMVLGNHDLHLLAVYAGISRNKPKDRISDLLTAPDADELINWLRRQPILQVDDDLKLVMAHAGITPQWDLPTAQMCAREVEAILSSDSYPLFLDAMYGDMPNHWSPELSGLARLRFSTNVFTRMRYCFSGGQLDMLCKEPPSQAPSLLKPWFDLPSQVAGEYAIAFGHWASLEGKGTPENIYALDTGCCWGGELTMLRWDDKRYFTQSSLSSNTESSGDIAL.

It belongs to the Ap4A hydrolase family.

The enzyme catalyses P(1),P(4)-bis(5'-adenosyl) tetraphosphate + H2O = 2 ADP + 2 H(+). In terms of biological role, hydrolyzes diadenosine 5',5'''-P1,P4-tetraphosphate to yield ADP. This is Bis(5'-nucleosyl)-tetraphosphatase, symmetrical from Pectobacterium carotovorum subsp. carotovorum (strain PC1).